Consider the following 412-residue polypeptide: Acetylornithine aminotransferase (412 aa).

Residues 109 to 110 (GA) and Phe142 contribute to the pyridoxal 5'-phosphate site. Arg145 is a binding site for N(2)-acetyl-L-ornithine. 233–236 (DEVQ) contributes to the pyridoxal 5'-phosphate binding site. Residue Lys262 is modified to N6-(pyridoxal phosphate)lysine. Ser289 is a N(2)-acetyl-L-ornithine binding site. Thr290 is a pyridoxal 5'-phosphate binding site.

Belongs to the class-III pyridoxal-phosphate-dependent aminotransferase family. ArgD subfamily. As to quaternary structure, homodimer. The cofactor is pyridoxal 5'-phosphate.

The protein resides in the cytoplasm. It catalyses the reaction N(2)-acetyl-L-ornithine + 2-oxoglutarate = N-acetyl-L-glutamate 5-semialdehyde + L-glutamate. It functions in the pathway amino-acid biosynthesis; L-arginine biosynthesis; N(2)-acetyl-L-ornithine from L-glutamate: step 4/4. This Thermosynechococcus vestitus (strain NIES-2133 / IAM M-273 / BP-1) protein is Acetylornithine aminotransferase.